The chain runs to 252 residues: 5'-nucleotidase SurE (252 aa).

Positions 8, 9, 39, and 95 each coordinate a divalent metal cation.

It belongs to the SurE nucleotidase family. A divalent metal cation is required as a cofactor.

The protein localises to the cytoplasm. The catalysed reaction is a ribonucleoside 5'-phosphate + H2O = a ribonucleoside + phosphate. Functionally, nucleotidase that shows phosphatase activity on nucleoside 5'-monophosphates. The polypeptide is 5'-nucleotidase SurE (Clostridium botulinum (strain ATCC 19397 / Type A)).